The primary structure comprises 235 residues: Large ribosomal subunit protein uL1 (235 aa).

It belongs to the universal ribosomal protein uL1 family. Part of the 50S ribosomal subunit.

In terms of biological role, binds directly to 23S rRNA. The L1 stalk is quite mobile in the ribosome, and is involved in E site tRNA release. Functionally, protein L1 is also a translational repressor protein, it controls the translation of the L11 operon by binding to its mRNA. This chain is Large ribosomal subunit protein uL1, found in Thermobifida fusca (strain YX).